We begin with the raw amino-acid sequence, 847 residues long: Putative disease resistance RPP13-like protein 3 (847 aa).

The stretch at 24–41 (LMGVKDDLEELKTELTCI) forms a coiled coil. The region spanning 143–453 (TNVRVRQLRR…AEGFIQEDEE (311 aa)) is the NB-ARC domain. 192–199 (GMGGLGKT) lines the ATP pocket.

Belongs to the disease resistance NB-LRR family. RPP13 subfamily.

Its function is as follows. Potential disease resistance protein. The sequence is that of Putative disease resistance RPP13-like protein 3 (RPP13L3) from Arabidopsis thaliana (Mouse-ear cress).